We begin with the raw amino-acid sequence, 85 residues long: MVKLRLKRVGKKFHAQYKIVAADARSPRDGKFIEELGHYDPHAKKLTLNKELLTKYLDQGAKPTDTVRTLLKQEQFYSNYIASKK.

This sequence belongs to the bacterial ribosomal protein bS16 family.

The chain is Small ribosomal subunit protein bS16 from Metamycoplasma arthritidis (strain 158L3-1) (Mycoplasma arthritidis).